A 233-amino-acid chain; its full sequence is 2-C-methyl-D-erythritol 4-phosphate cytidylyltransferase (233 aa).

This sequence belongs to the IspD/TarI cytidylyltransferase family. IspD subfamily.

The catalysed reaction is 2-C-methyl-D-erythritol 4-phosphate + CTP + H(+) = 4-CDP-2-C-methyl-D-erythritol + diphosphate. It participates in isoprenoid biosynthesis; isopentenyl diphosphate biosynthesis via DXP pathway; isopentenyl diphosphate from 1-deoxy-D-xylulose 5-phosphate: step 2/6. Its function is as follows. Catalyzes the formation of 4-diphosphocytidyl-2-C-methyl-D-erythritol from CTP and 2-C-methyl-D-erythritol 4-phosphate (MEP). The protein is 2-C-methyl-D-erythritol 4-phosphate cytidylyltransferase of Lachnoclostridium phytofermentans (strain ATCC 700394 / DSM 18823 / ISDg) (Clostridium phytofermentans).